The primary structure comprises 637 residues: ATP-dependent zinc metalloprotease FtsH (637 aa).

The Cytoplasmic portion of the chain corresponds to 1 to 6 (MNNQGR). Residues 7-27 (SILAWATLFIFVILLFNVFQS) form a helical membrane-spanning segment. Residues 28 to 103 (DSLLGGRNNI…VVPLETRMNT (76 aa)) are Periplasmic-facing. Residues 104-124 (FLGFLISWFPMLLLIGVWVFF) form a helical membrane-spanning segment. Residues 125 to 637 (MRQMHGGGKA…TKAKKENYAS (513 aa)) are Cytoplasmic-facing. 195–202 (GPPGTGKT) serves as a coordination point for ATP. Residue His417 participates in Zn(2+) binding. Glu418 is a catalytic residue. Zn(2+) is bound by residues His421 and Asp495. Residues 603 to 637 (ENKFPFNDSSTIKIDKEKSPEKTKTTKAKKENYAS) are disordered. The segment covering 615–637 (KIDKEKSPEKTKTTKAKKENYAS) has biased composition (basic and acidic residues).

The protein in the central section; belongs to the AAA ATPase family. In the C-terminal section; belongs to the peptidase M41 family. Homohexamer. Zn(2+) is required as a cofactor.

It is found in the cell inner membrane. Its function is as follows. Acts as a processive, ATP-dependent zinc metallopeptidase for both cytoplasmic and membrane proteins. Plays a role in the quality control of integral membrane proteins. The protein is ATP-dependent zinc metalloprotease FtsH of Rickettsia conorii (strain ATCC VR-613 / Malish 7).